The chain runs to 338 residues: MIKTDALIIGAGPTGLFCAHQLGLIGLNCEIVDNLDKIGGQCIELYPDKPIYDIPAVPECTGEELTNNLIKQIKPFNIKFHLNERVEEVNKVNNKWIVKTNKKKEFVTPNIIIAGGVGSFEPRKFSPKECEKYENRSLFYSIKDKTIFQDKTISIFGGGDSALDWAIELSKSSYVNLIHRRDEFTGAQLSIDKIKELEKSGKLKIYTKYQLNSVKGEQNIKSIEIKHDDESLKELETNYVLGFFGLIMKLGPIVDWGLNLDKKTIPVNTENFETNLNGIFAIGDICTYPGKLKLILSGFHEGALAARGCFKYARPDEKLRFEFTTTSKAAQERLGVKK.

8 residues coordinate FAD: T14, D33, Q41, Y46, V86, F120, D284, and T325.

Belongs to the ferredoxin--NADP reductase type 2 family. Homodimer. FAD serves as cofactor.

It carries out the reaction 2 reduced [2Fe-2S]-[ferredoxin] + NADP(+) + H(+) = 2 oxidized [2Fe-2S]-[ferredoxin] + NADPH. In Pelagibacter ubique (strain HTCC1062), this protein is Ferredoxin--NADP reductase.